We begin with the raw amino-acid sequence, 396 residues long: Cytochrome P450 121 (396 aa).

Cys345 lines the heme pocket.

It belongs to the cytochrome P450 family. It depends on heme as a cofactor.

Its subcellular location is the cytoplasm. The chain is Cytochrome P450 121 (cyp121) from Mycobacterium bovis (strain ATCC BAA-935 / AF2122/97).